A 693-amino-acid chain; its full sequence is Histone-lysine N-methyltransferase, H3 lysine-9 specific SUVH7 (693 aa).

Disordered stretches follow at residues 64–99 (WYDG…PPEM) and 111–175 (DSSN…AETE). A DNA-binding region (a.T hook) is located at residues 129 to 141 (KRGRGRPKGSKNS). The YDG domain maps to 227–373 (GAVPGIHVGD…FKEFRFKLVR (147 aa)). One can recognise a Pre-SET domain in the interval 454 to 516 (QSLGCQNCRH…HCPTRLVQTG (63 aa)). Positions 458, 461, 466, 471, 473, 498, 502, 504, and 508 each coordinate Zn(2+). In terms of domain architecture, SET spans 519–660 (LHLEVFKTRN…PMTELTYDYG (142 aa)). S-adenosyl-L-methionine-binding positions include 529–531 (CGW), D562, Y564, R614, and 617–618 (NH). Residues C620, C681, C683, and C688 each contribute to the Zn(2+) site. Residues 677–693 (GKKTCLCGSVKCRGSFT) enclose the Post-SET domain.

It belongs to the class V-like SAM-binding methyltransferase superfamily. Histone-lysine methyltransferase family. Suvar3-9 subfamily.

The protein resides in the nucleus. Its subcellular location is the chromosome. It localises to the centromere. It catalyses the reaction N(6)-methyl-L-lysyl(9)-[histone H3] + S-adenosyl-L-methionine = N(6),N(6)-dimethyl-L-lysyl(9)-[histone H3] + S-adenosyl-L-homocysteine + H(+). It carries out the reaction L-lysyl(9)-[histone H3] + S-adenosyl-L-methionine = N(6)-methyl-L-lysyl(9)-[histone H3] + S-adenosyl-L-homocysteine + H(+). Histone methyltransferase. Methylates 'Lys-9' of histone H3. H3 'Lys-9' methylation represents a specific tag for epigenetic transcriptional repression. The chain is Histone-lysine N-methyltransferase, H3 lysine-9 specific SUVH7 (SUVH7) from Arabidopsis thaliana (Mouse-ear cress).